Here is a 468-residue protein sequence, read N- to C-terminus: 5-carboxymethyl-2-hydroxymuconate semialdehyde dehydrogenase (468 aa).

Glu244 is a catalytic residue. Catalysis depends on Cys278, which acts as the Nucleophile.

This sequence belongs to the aldehyde dehydrogenase family. As to quaternary structure, homodimer.

The enzyme catalyses 2-hydroxy-5-carboxymethylmuconate semialdehyde + NAD(+) + H2O = (2E,4Z)-5-hydroxypenta-2,4-diene-1,2,5-tricarboxylate + NADH + 2 H(+). The protein operates within aromatic compound metabolism; 4-hydroxyphenylacetate degradation; pyruvate and succinate semialdehyde from 4-hydroxyphenylacetate: step 3/7. Catalyzes the conversion of 5-carboxymethyl-2-hydroxy-muconic semialdehyde (CHMS) into 5-carboxymethyl-2-hydroxy-muconic acid (CHM or (2E,4Z)-5-hydroxypenta-2,4-diene-1,2,5-tricarboxylate). Is involved in a meta-cleavage pathway for the catabolism of 4-hydroxyphenylacetate (4-HPA) via homoprotocatechuate (HPC or 3,4-dihydroxyphenylacetate). This chain is 5-carboxymethyl-2-hydroxymuconate semialdehyde dehydrogenase, found in Escherichia coli.